A 274-amino-acid chain; its full sequence is Sulfur carrier protein FdhD (274 aa).

Catalysis depends on cysteine 121, which acts as the Cysteine persulfide intermediate. 258–263 serves as a coordination point for Mo-bis(molybdopterin guanine dinucleotide); sequence FSKPGR.

Belongs to the FdhD family.

Its subcellular location is the cytoplasm. In terms of biological role, required for formate dehydrogenase (FDH) activity. Acts as a sulfur carrier protein that transfers sulfur from IscS to the molybdenum cofactor prior to its insertion into FDH. The chain is Sulfur carrier protein FdhD from Yersinia pestis bv. Antiqua (strain Antiqua).